A 213-amino-acid polypeptide reads, in one-letter code: Orotate phosphoribosyltransferase (213 aa).

5-phospho-alpha-D-ribose 1-diphosphate is bound at residue Lys-26. 34–35 is a binding site for orotate; the sequence is FF. 5-phospho-alpha-D-ribose 1-diphosphate is bound by residues 72–73, Arg-98, Lys-99, Lys-102, and 123–131; these read YK and DDVISAGTS. Ser-127 and Arg-155 together coordinate orotate.

It belongs to the purine/pyrimidine phosphoribosyltransferase family. PyrE subfamily. As to quaternary structure, homodimer. It depends on Mg(2+) as a cofactor.

The catalysed reaction is orotidine 5'-phosphate + diphosphate = orotate + 5-phospho-alpha-D-ribose 1-diphosphate. It functions in the pathway pyrimidine metabolism; UMP biosynthesis via de novo pathway; UMP from orotate: step 1/2. Its function is as follows. Catalyzes the transfer of a ribosyl phosphate group from 5-phosphoribose 1-diphosphate to orotate, leading to the formation of orotidine monophosphate (OMP). This is Orotate phosphoribosyltransferase from Neisseria gonorrhoeae (strain NCCP11945).